The sequence spans 237 residues: Pyrimidine 5'-nucleotidase PynA (237 aa).

The active-site Nucleophile is the D9. Positions 9, 11, and 181 each coordinate Mg(2+). D11 (proton donor) is an active-site residue.

Belongs to the HAD-like hydrolase superfamily. YjjG family. Homodimer. Mg(2+) is required as a cofactor. The cofactor is Mn(2+).

The protein localises to the cytoplasm. The catalysed reaction is a ribonucleoside 5'-phosphate + H2O = a ribonucleoside + phosphate. In terms of biological role, nucleotidase that shows high phosphatase activity toward non-canonical pyrimidine nucleotides and three canonical nucleoside 5'-monophosphates (UMP, dUMP and dTMP), and no activity against IMP, UDP, GMP, AMP, UTP or pNPP. Appears to function as a house-cleaning nucleotidase in vivo, since the general nucleotidase activity of it allows it to protect cells against non-canonical pyrimidine derivatives such as 5-fluoro-2'-deoxyuridine monophosphate (5-FdUMP), and prevents the incorporation of potentially mutagenic nucleotides such as 5-bromo-2'-deoxyuridine (5-BrdU) into DNA. Is strictly specific to pyrimidine substrates with 5'-monophosphates and shows no activity against nucleoside di- and triphosphates. The chain is Pyrimidine 5'-nucleotidase PynA from Streptococcus pneumoniae (strain ATCC BAA-255 / R6).